A 317-amino-acid polypeptide reads, in one-letter code: Acetyl-coenzyme A carboxylase carboxyl transferase subunit alpha (317 aa).

The 254-residue stretch at L40–E293 folds into the CoA carboxyltransferase C-terminal domain.

Belongs to the AccA family. As to quaternary structure, acetyl-CoA carboxylase is a heterohexamer composed of biotin carboxyl carrier protein (AccB), biotin carboxylase (AccC) and two subunits each of ACCase subunit alpha (AccA) and ACCase subunit beta (AccD).

It is found in the cytoplasm. The enzyme catalyses N(6)-carboxybiotinyl-L-lysyl-[protein] + acetyl-CoA = N(6)-biotinyl-L-lysyl-[protein] + malonyl-CoA. Its pathway is lipid metabolism; malonyl-CoA biosynthesis; malonyl-CoA from acetyl-CoA: step 1/1. In terms of biological role, component of the acetyl coenzyme A carboxylase (ACC) complex. First, biotin carboxylase catalyzes the carboxylation of biotin on its carrier protein (BCCP) and then the CO(2) group is transferred by the carboxyltransferase to acetyl-CoA to form malonyl-CoA. This is Acetyl-coenzyme A carboxylase carboxyl transferase subunit alpha from Sinorhizobium medicae (strain WSM419) (Ensifer medicae).